A 390-amino-acid chain; its full sequence is MTLQSRWEAVMMNNYGTPPLSLVSGEGAVVTDADGREYLDLLGGIAVNLLGHRHPAVIEAVTTQLDTLGHTSNLYATEPGIALAEALVGQLGTQARVFFCNSGTEANEVAFKITRLTGKTKIVAAEGAFHGRTMGSLALTGQPSKQAPFEPLPGNVMHVPYGDVAALEAAVDDQTAAVFLEPIMGEGGVVVPPAGYLVAAREITSKHGALLVLDEVQTGVGRTGAFFAHQHDGIVPDVVTMAKGLGGGLPIGACLAVGATGDLLTPGLHGSTFGGNPVCTAAGLAVLKTLAAEDLVARAGVLGKTLSHGIEELGHPLVDKVRGKGLLQGIVLTVPSAKAVETAARDAGFLVNAAAPEVVRLAPPLIITEGQIEAFITALPAVLDTAAEDS.

Pyridoxal 5'-phosphate contacts are provided by residues 103 to 104 and phenylalanine 129; that span reads GT. Position 132 (arginine 132) interacts with N(2)-acetyl-L-ornithine. 214–217 serves as a coordination point for pyridoxal 5'-phosphate; that stretch reads DEVQ. Lysine 243 carries the N6-(pyridoxal phosphate)lysine modification. N(2)-acetyl-L-ornithine is bound at residue serine 271. Threonine 272 contributes to the pyridoxal 5'-phosphate binding site. Lysine 304 participates in a covalent cross-link: Isoglutamyl lysine isopeptide (Lys-Gln) (interchain with Q-Cter in protein Pup).

It belongs to the class-III pyridoxal-phosphate-dependent aminotransferase family. ArgD subfamily. In terms of assembly, homodimer. Pyridoxal 5'-phosphate is required as a cofactor.

It localises to the cytoplasm. It catalyses the reaction N(2)-acetyl-L-ornithine + 2-oxoglutarate = N-acetyl-L-glutamate 5-semialdehyde + L-glutamate. Its pathway is amino-acid biosynthesis; L-arginine biosynthesis; N(2)-acetyl-L-ornithine from L-glutamate: step 4/4. The polypeptide is Acetylornithine aminotransferase (Mycolicibacterium smegmatis (strain ATCC 700084 / mc(2)155) (Mycobacterium smegmatis)).